The chain runs to 295 residues: Probable peptidyl-prolyl cis-trans isomerase B (295 aa).

2 disordered regions span residues 105–128 and 274–295; these read SADKAAKPVKPPRAGKVPTDPATV and IASGGDDGPPATEVTIESLRLD. One can recognise a PPIase cyclophilin-type domain in the interval 126–294; the sequence is ATVSASMATN…TEVTIESLRL (169 aa).

The protein belongs to the cyclophilin-type PPIase family.

The catalysed reaction is [protein]-peptidylproline (omega=180) = [protein]-peptidylproline (omega=0). Functionally, PPIases accelerate the folding of proteins. It catalyzes the cis-trans isomerization of proline imidic peptide bonds in oligopeptides. In Mycobacterium leprae (strain TN), this protein is Probable peptidyl-prolyl cis-trans isomerase B (ppiB).